Here is a 109-residue protein sequence, read N- to C-terminus: MLPMNPKQMKKMMKQMGIEMEELDAEEVIIRTSDEELIFRNPNVSKISARGVETFQIVGEYEVVKRPPKISEDDIKLIMEQANVDEETARRALEEAGGDLAEALMKLQE.

An NAC-A/B domain is found at 3 to 70 (PMNPKQMKKM…YEVVKRPPKI (68 aa)).

This sequence belongs to the NAC-alpha family. In terms of assembly, homodimer. Interacts with the ribosome. Binds ribosomal RNA.

Contacts the emerging nascent chain on the ribosome. This is Nascent polypeptide-associated complex protein from Archaeoglobus fulgidus (strain ATCC 49558 / DSM 4304 / JCM 9628 / NBRC 100126 / VC-16).